We begin with the raw amino-acid sequence, 679 residues long: Recombination repair protein 1 (679 aa).

Residues 1 to 407 form a disordered region; the sequence is MPRVKAVKKQ…TKKAKKAETK (407 aa). Over residues 45-55 the composition is skewed to basic residues; that stretch reads AKGKPRARKAT. Residues 106-116 show a composition bias toward basic and acidic residues; that stretch reads ATAEAEPEPKV. Residues threonine 133 and threonine 140 each carry the phosphothreonine modification. Phosphoserine is present on serine 142. Composition is skewed to basic and acidic residues over residues 179–189 and 203–214; these read EPPKQRARKEA and SKEKVQKAETAA. Serine 258 is subject to Phosphoserine. Residues 312–347 are compositionally biased toward basic and acidic residues; sequence KKEGKEPAPGKKQKKSADKENGVVEEEAKPSTETKP. Residues 428–679 form an AP endonuclease region; sequence KICSWNVAGL…HCPITIFFNI (252 aa). Residue glutamate 461 coordinates Mg(2+). Residue tyrosine 533 is part of the active site. Residues aspartate 572, asparagine 574, and aspartate 669 each coordinate Mg(2+). Aspartate 572 acts as the Proton donor/acceptor in catalysis.

Belongs to the DNA repair enzymes AP/ExoA family. As to quaternary structure, interacts with the zeta DNA polymerase complex; interacts (via the N-terminus) with the accessory subunit PolZ2/Rev7 and also interacts with the catalytic component PolZ1, however the interaction with PolZ1 is likely via PolZ2. The cofactor is Mg(2+). Mn(2+) serves as cofactor.

The protein localises to the nucleus. The enzyme catalyses Exonucleolytic cleavage in the 3'- to 5'-direction to yield nucleoside 5'-phosphates.. Plays a role in the cellular response to oxidative stress by promoting DNA repair mechanisms such as base excision repair and possibly homologous recombination repair. Functions as an apurinic/apyrimidinic (AP) endodeoxyribonuclease in the DNA base excision repair (BER) pathway of DNA lesions induced by oxidative and alkylating agents. Likely to initiate repair of AP sites in DNA by catalyzing hydrolytic incision of the phosphodiester backbone immediately adjacent to the damage, generating a single-strand break with 5'-deoxyribose phosphate and 3'-hydroxyl ends. Has a 3'-5' exoribonuclease activity on mismatched deoxyribonucleotides at the 3' termini of nicked or gapped DNA molecules during short-patch BER. Has apurinic endonuclease and double-stranded DNA 3'-exonuclease activities and carries out single-stranded DNA renaturation in a Mg(2+)-dependent manner. Activity is more efficient in purine-rich regions of dsDNA than in pyrimidine-rich regions. This is Recombination repair protein 1 from Drosophila melanogaster (Fruit fly).